The sequence spans 60 residues: 5-hydroxytryptamine receptor 2B (60 aa).

Residues 1-4 (VLCP) are Extracellular-facing. A helical membrane pass occupies residues 5–26 (AWLFLDVLFSTASIMHLCAISV). Ergotamine is bound by residues Asp-10 and Thr-15. Residues 27-29 (DRY) carry the DRY motif; important for ligand-induced conformation changes motif. Residues 27–46 (DRYIAIKKPIQANQYNSRAT) lie on the Cytoplasmic side of the membrane. Residues 47–60 (AFIKITVVWLISIG) traverse the membrane as a helical segment.

The protein belongs to the G-protein coupled receptor 1 family. As to quaternary structure, interacts (via C-terminus) with MPDZ. As to expression, detected in aorta, renal artery, jugular vein, vena cava and femoral vein.

It is found in the cell membrane. Its subcellular location is the synapse. The protein resides in the synaptosome. In terms of biological role, G-protein coupled receptor for 5-hydroxytryptamine (serotonin). Also functions as a receptor for various ergot alkaloid derivatives and psychoactive substances. Ligand binding causes a conformation change that triggers signaling via guanine nucleotide-binding proteins (G proteins) and modulates the activity of downstream effectors. HTR2B is coupled to G(q)/G(11) G alpha proteins and activates phospholipase C-beta, releasing diacylglycerol (DAG) and inositol 1,4,5-trisphosphate (IP3) second messengers that modulate the activity of phosphatidylinositol 3-kinase and promote the release of Ca(2+) ions from intracellular stores, respectively. Beta-arrestin family members inhibit signaling via G proteins and mediate activation of alternative signaling pathways. Plays a role in the regulation of dopamine and 5-hydroxytryptamine release, 5-hydroxytryptamine uptake and in the regulation of extracellular dopamine and 5-hydroxytryptamine levels, and thereby affects neural activity. May play a role in the perception of pain. Plays a role in the regulation of behavior, including impulsive behavior. Required for normal proliferation of embryonic cardiac myocytes and normal heart development. Protects cardiomyocytes against apoptosis. Plays a role in the adaptation of pulmonary arteries to chronic hypoxia. Plays a role in vasoconstriction. Required for normal osteoblast function and proliferation, and for maintaining normal bone density. Required for normal proliferation of the interstitial cells of Cajal in the intestine. In Sus scrofa (Pig), this protein is 5-hydroxytryptamine receptor 2B (HTR2B).